A 1399-amino-acid polypeptide reads, in one-letter code: DNA-directed RNA polymerase subunit beta' (1399 aa).

The Zn(2+) site is built by cysteine 70, cysteine 72, cysteine 85, and cysteine 88. Mg(2+) is bound by residues aspartate 460, aspartate 462, and aspartate 464. The Zn(2+) site is built by cysteine 814, cysteine 888, cysteine 895, and cysteine 898.

This sequence belongs to the RNA polymerase beta' chain family. As to quaternary structure, the RNAP catalytic core consists of 2 alpha, 1 beta, 1 beta' and 1 omega subunit. When a sigma factor is associated with the core the holoenzyme is formed, which can initiate transcription. Requires Mg(2+) as cofactor. Zn(2+) serves as cofactor.

The catalysed reaction is RNA(n) + a ribonucleoside 5'-triphosphate = RNA(n+1) + diphosphate. DNA-dependent RNA polymerase catalyzes the transcription of DNA into RNA using the four ribonucleoside triphosphates as substrates. In Stutzerimonas stutzeri (strain A1501) (Pseudomonas stutzeri), this protein is DNA-directed RNA polymerase subunit beta'.